Reading from the N-terminus, the 835-residue chain is Translation initiation factor IF-2 (835 aa).

The interval 1–243 (MSDTDGKKTL…RARQKAMGGA (243 aa)) is disordered. Positions 43–67 (VPKPGAGKPSAGGSSPAGDPSRRPA) are enriched in low complexity. Basic and acidic residues-rich tracts occupy residues 85 to 147 (KARE…EAKR), 157 to 166 (EAPKAERSAE), and 175 to 205 (EGGD…DGRR). One can recognise a tr-type G domain in the interval 332–500 (PRPPVITIMG…AIALQAEILE (169 aa)). Residues 341–348 (GHVDHGKT) form a G1 region. 341–348 (GHVDHGKT) serves as a coordination point for GTP. Positions 366–370 (GITQH) are G2. The G3 stretch occupies residues 388-391 (DTPG). GTP contacts are provided by residues 388 to 392 (DTPGH) and 442 to 445 (NKID). Positions 442 to 445 (NKID) are G4. Residues 478-480 (SAK) form a G5 region.

Belongs to the TRAFAC class translation factor GTPase superfamily. Classic translation factor GTPase family. IF-2 subfamily.

It localises to the cytoplasm. Its function is as follows. One of the essential components for the initiation of protein synthesis. Protects formylmethionyl-tRNA from spontaneous hydrolysis and promotes its binding to the 30S ribosomal subunits. Also involved in the hydrolysis of GTP during the formation of the 70S ribosomal complex. The sequence is that of Translation initiation factor IF-2 from Ruegeria pomeroyi (strain ATCC 700808 / DSM 15171 / DSS-3) (Silicibacter pomeroyi).